Here is a 254-residue protein sequence, read N- to C-terminus: Serotonin N-acetyltransferase 1, chloroplastic (254 aa).

The transit peptide at 1–74 (MAPAASASAS…LRSGFLKSNN (74 aa)) directs the protein to the chloroplast. In terms of domain architecture, N-acetyltransferase spans 111–254 (IIFSSAGDVN…IKGMFWYPRF (144 aa)).

This sequence belongs to the acetyltransferase family. As to expression, expressed in roots and shoots.

Its subcellular location is the plastid. It localises to the chloroplast. The protein resides in the nucleus. It catalyses the reaction serotonin + acetyl-CoA = N-acetylserotonin + CoA + H(+). The enzyme catalyses tyramine + acetyl-CoA = N-acetyltyramine + CoA + H(+). It carries out the reaction tryptamine + acetyl-CoA = N-acetyltryptamine + CoA + H(+). The catalysed reaction is 5-methoxytryptamine + acetyl-CoA = melatonin + CoA + H(+). Its pathway is aromatic compound metabolism; melatonin biosynthesis; melatonin from serotonin: step 1/2. In terms of biological role, catalyzes the N-acetylation of serotonin into N-acetylserotonin, the penultimate step in the synthesis of melatonin. Catalyzes in vitro the N-acetylation of tryptamine to produce N-acetyltryptamine, 5-methoxytryptamine to produce melatonin and tyramine to produce N-acetyltyramine. This chain is Serotonin N-acetyltransferase 1, chloroplastic, found in Oryza sativa subsp. japonica (Rice).